We begin with the raw amino-acid sequence, 241 residues long: DnaJ homolog subfamily C member 4 (241 aa).

Positions 34 to 99 (TYYELLGVHP…QSRRSYDDQL (66 aa)) constitute a J domain. Over residues 88-99 (REQSRRSYDDQL) the composition is skewed to basic and acidic residues. Positions 88 to 129 (REQSRRSYDDQLRSGSPPKSPRTTVHDKSAHQTHSSWTPPNA) are disordered. Residues 119-129 (QTHSSWTPPNA) show a composition bias toward polar residues. A helical membrane pass occupies residues 156 to 175 (VLGYCLLLMLAGMGLHYIAF). Residues 212–241 (QQERQRLGQRQPPPSEPTQGPEIVPRGAGP) are disordered.

It localises to the membrane. This chain is DnaJ homolog subfamily C member 4 (DNAJC4), found in Homo sapiens (Human).